A 252-amino-acid polypeptide reads, in one-letter code: Imidazole glycerol phosphate synthase subunit HisF (252 aa).

Catalysis depends on residues Asp-11 and Asp-130.

Belongs to the HisA/HisF family. In terms of assembly, heterodimer of HisH and HisF.

It localises to the cytoplasm. The catalysed reaction is 5-[(5-phospho-1-deoxy-D-ribulos-1-ylimino)methylamino]-1-(5-phospho-beta-D-ribosyl)imidazole-4-carboxamide + L-glutamine = D-erythro-1-(imidazol-4-yl)glycerol 3-phosphate + 5-amino-1-(5-phospho-beta-D-ribosyl)imidazole-4-carboxamide + L-glutamate + H(+). Its pathway is amino-acid biosynthesis; L-histidine biosynthesis; L-histidine from 5-phospho-alpha-D-ribose 1-diphosphate: step 5/9. Its function is as follows. IGPS catalyzes the conversion of PRFAR and glutamine to IGP, AICAR and glutamate. The HisF subunit catalyzes the cyclization activity that produces IGP and AICAR from PRFAR using the ammonia provided by the HisH subunit. This chain is Imidazole glycerol phosphate synthase subunit HisF, found in Anoxybacillus flavithermus (strain DSM 21510 / WK1).